Reading from the N-terminus, the 384-residue chain is uncharacterized protein (384 aa).

This is an uncharacterized protein from Acanthamoeba polyphaga (Amoeba).